A 193-amino-acid polypeptide reads, in one-letter code: Large ribosomal subunit protein bL25 (193 aa).

The protein belongs to the bacterial ribosomal protein bL25 family. CTC subfamily. As to quaternary structure, part of the 50S ribosomal subunit; part of the 5S rRNA/L5/L18/L25 subcomplex. Contacts the 5S rRNA. Binds to the 5S rRNA independently of L5 and L18.

In terms of biological role, this is one of the proteins that binds to the 5S RNA in the ribosome where it forms part of the central protuberance. The protein is Large ribosomal subunit protein bL25 of Oleidesulfovibrio alaskensis (strain ATCC BAA-1058 / DSM 17464 / G20) (Desulfovibrio alaskensis).